The following is a 52-amino-acid chain: Rubredoxin (52 aa).

Methionine 1 is modified (N-formylmethionine; partial). The region spanning 1–52 (MKKYGCLVCGYVYDPAKGDPDHGIAPGTAFEDLPADWVCPLCGVSKDEFEPL) is the Rubredoxin-like domain. Residues cysteine 6, cysteine 9, cysteine 39, and cysteine 42 each coordinate Fe cation.

This sequence belongs to the rubredoxin family. Requires Fe(3+) as cofactor. In terms of processing, observed in four forms, with and without iron, and with and without formylation at Met-1.

Rubredoxin is a small nonheme, iron protein lacking acid-labile sulfide. Its single Fe, chelated to 4 Cys, functions as an electron acceptor and may also stabilize the conformation of the molecule. This chain is Rubredoxin, found in Heliobacterium mobile (Heliobacillus mobilis).